A 99-amino-acid chain; its full sequence is Plastocyanin (99 aa).

The Plastocyanin-like domain occupies 1-99 (VEVLMGGSGG…IGMSGIVTVN (99 aa)). Positions 37, 84, 87, and 92 each coordinate Cu cation.

It belongs to the plastocyanin family. Cu(2+) serves as cofactor.

It is found in the plastid. The protein localises to the chloroplast thylakoid membrane. Its function is as follows. Participates in electron transfer between P700 and the cytochrome b6-f complex in photosystem I. The polypeptide is Plastocyanin (PETE) (Ginkgo biloba (Ginkgo)).